Consider the following 480-residue polypeptide: Lysostaphin (480 aa).

The signal sequence occupies residues 1 to 23; that stretch reads MKKTKNNYYTTPLAIGLSTFALA. Positions 24-234 are excised as a propeptide; it reads SIVYGGIQNE…ALVQNRTALR (211 aa). 13 consecutive repeat copies span residues 49-61, 62-74, 75-87, 88-100, 101-113, 114-126, 127-139, 140-152, 153-165, 166-178, 179-191, 192-204, and 205-217. Residues 49-230 form a 14 X 13 AA tandem repeats of A-E-V-E-T-S-K-[AP]-P-V-E-N-T region; sequence AEVETSKPPV…ETSKALVQNR (182 aa). The disordered stretch occupies residues 51 to 219; sequence VETSKPPVEN…SKAPVENTAE (169 aa). The 14; approximate repeat unit spans residues 218–230; it reads AEVETSKALVQNR. 2 residues coordinate Zn(2+): histidine 266 and aspartate 270. Residue histidine 347 is part of the active site. Histidine 349 provides a ligand contact to Zn(2+). In terms of domain architecture, SH3b spans 400-468; the sequence is SESASFTPNT…YLPVRTWNKS (69 aa).

Belongs to the peptidase M23B family. Monomer. Zn(2+) is required as a cofactor.

Its subcellular location is the secreted. It catalyses the reaction Hydrolysis of the -Gly-|-Gly- bond in the pentaglycine inter-peptide link joining staphylococcal cell wall peptidoglycans.. Its function is as follows. Lyses staphylococcal cells by hydrolyzing the polyglycine interpeptide bridges of the peptidoglycan. The chain is Lysostaphin (lss) from Staphylococcus staphylolyticus.